We begin with the raw amino-acid sequence, 163 residues long: Cyclic pyranopterin monophosphate synthase (163 aa).

Substrate-binding positions include 76-78 and 114-115; these read LCH and ME. Residue Asp-129 is part of the active site.

The protein belongs to the MoaC family. In terms of assembly, homohexamer; trimer of dimers.

The catalysed reaction is (8S)-3',8-cyclo-7,8-dihydroguanosine 5'-triphosphate = cyclic pyranopterin phosphate + diphosphate. It participates in cofactor biosynthesis; molybdopterin biosynthesis. Functionally, catalyzes the conversion of (8S)-3',8-cyclo-7,8-dihydroguanosine 5'-triphosphate to cyclic pyranopterin monophosphate (cPMP). This Desulfovibrio desulfuricans (strain ATCC 27774 / DSM 6949 / MB) protein is Cyclic pyranopterin monophosphate synthase.